The primary structure comprises 662 residues: MKKTLTTIRRSSIARRLIISFLLILIVPITALSVSAYQSAVASLDVQMTQSAKENVQILDHIIDDKISTTEKSLAYFSDWATAEKFQDKKKTELKQEFKQFIQMNDNVAAVFSSGKDGDFTRYPYADMPSDFNALERDWYKEAMANKGKTIVTEPYESISSGKMVVTIARQTVDGSGVVAIDMKIDDLVTTAKGINIGKEGYAFILSQNKKVIAYSGEKAGTELKGDWVDKLYKDKSGDFEYTYKGKKKKMAFATSQTTGWKISGTMYANEIHDAASRVLIMASIVLAIAIGAGMTAIYFVIRSITKPLRRIVASAEKISEGDLTETIEINSKDELGVLSESFNHMAHSLRSLIHGIKDSVEHVASSSEELTASADQTSRATEHITMAIEQFSNGSESQSEKIETTTEQINEMNDGLAELARAAAVITETSADSTEVSSKGETLVQKTAGQMNTIDHSVKAAEQVVKGLEIKSKDITNILRVINGIADQTNLLALNAAIEAARAGEYGRGFSVVAEEVRKLAVQSADSAKEIESLISEIVKEIHTSLNVLQSVNKEVETGLVMTDETKQSFKHISQMTNQIASELQNMNATVEELSAGAQEISAASNDITAISKESSDGIQDIAASAEEQLASMEEISSSALTLERMSEELRDLTKQFKVDK.

The Cytoplasmic segment spans residues 1-16 (MKKTLTTIRRSSIARR). A helical transmembrane segment spans residues 17–37 (LIISFLLILIVPITALSVSAY). Residues 38-281 (QSAVASLDVQ…IHDAASRVLI (244 aa)) are Extracellular-facing. Positions 152-228 (VTEPYESISS…KAGTELKGDW (77 aa)) constitute a Cache domain. The chain crosses the membrane as a helical span at residues 282 to 302 (MASIVLAIAIGAGMTAIYFVI). Residues 303–355 (RSITKPLRRIVASAEKISEGDLTETIEINSKDELGVLSESFNHMAHSLRSLIH) form the HAMP domain. The Cytoplasmic portion of the chain corresponds to 303 to 662 (RSITKPLRRI…DLTKQFKVDK (360 aa)). A glutamate methyl ester (Glu) mark is found at Glu-370, Glu-594, Glu-629, and Glu-636. A Methyl-accepting transducer domain is found at 374–610 (SADQTSRATE…EISAASNDIT (237 aa)).

The protein belongs to the methyl-accepting chemotaxis (MCP) protein family. In terms of assembly, interacts with YabA.

It is found in the cell membrane. Its function is as follows. Chemotactic-signal transducers respond to changes in the concentration of attractants and repellents in the environment, transduce a signal from the outside to the inside of the cell, and facilitate sensory adaptation through the variation of the level of methylation. All amino acids serve as attractants in B.subtilis, they appear to cause an increase in the turnover methyl groups, leading to methylation of an unidentified acceptor, while repellents have been shown to cause a decrease in methyl group turnover. The methyl groups are added by a methyltransferase and removed by a methylesterase. The protein is Methyl-accepting chemotaxis protein TlpA of Bacillus subtilis (strain 168).